Consider the following 557-residue polypeptide: 2-isopropylmalate synthase (557 aa).

The Pyruvate carboxyltransferase domain occupies 31 to 304; sequence PTWCSVDLRD…DPGLNFASML (274 aa). Mg(2+)-binding residues include Asp40, His243, His245, and Asn279. The interval 439–557 is regulatory domain; it reads IENPIKFLNF…NTMIKDSAAV (119 aa).

The protein belongs to the alpha-IPM synthase/homocitrate synthase family. LeuA type 2 subfamily. As to quaternary structure, homodimer. Mg(2+) serves as cofactor.

The protein resides in the cytoplasm. The catalysed reaction is 3-methyl-2-oxobutanoate + acetyl-CoA + H2O = (2S)-2-isopropylmalate + CoA + H(+). It participates in amino-acid biosynthesis; L-leucine biosynthesis; L-leucine from 3-methyl-2-oxobutanoate: step 1/4. Functionally, catalyzes the condensation of the acetyl group of acetyl-CoA with 3-methyl-2-oxobutanoate (2-ketoisovalerate) to form 3-carboxy-3-hydroxy-4-methylpentanoate (2-isopropylmalate). The sequence is that of 2-isopropylmalate synthase from Desulfitobacterium hafniense (strain Y51).